Reading from the N-terminus, the 1663-residue chain is Cortactin-binding protein 2 (1663 aa).

5 disordered regions span residues 1-23, 203-222, 358-440, 454-479, and 498-616; these read MATDGASCEPDLSRAPEDAAGAA, KKKTNELEEELSAEKRRSTE, RQAS…LHPG, GNANDPDQNGNTTQSPPSRDMSPTSR, and RFTS…PKPS. Residues 119 to 276 adopt a coiled-coil conformation; that stretch reads KKMQERMSAQ…EQLKRGSDSK (158 aa). Positions 386-396 are enriched in low complexity; it reads PSTDSTPDPTS. Positions 411–422 are enriched in polar residues; that stretch reads QTPGIAPQNSQA. Asymmetric dimethylarginine is present on arginine 498. Polar residues predominate over residues 583 to 597; the sequence is TVASPPSSLPQGNRV. 6 ANK repeats span residues 709–739, 743–772, 776–805, 809–838, 842–871, and 912–942; these read GRPTLLQQAAAQGNVTLLSMLLNEEGLDINY, DGHSALYSAAKNGHTDCVRLLLSAEAQINA, NGFTPLCAAAAQGHFECVELLIAYDANINH, GGQTPLYLACKNENKECIKLLLEAGTNRSV, DGWTPVHAAVDTGNVDSLKLLMYHRIPACG, and EGWTAAHIAASKGFKNCLEILCRHGGLEPER. The tract at residues 1447–1477 is disordered; it reads KKKGESGAWRKVNTSPRRKSGRFSLPTWNKP. At serine 1524 the chain carries Phosphoserine. 2 disordered regions span residues 1581-1602 and 1618-1663; these read QKEVSPLSSHQTTECSNSKSKT and SKVT…KHNK. Over residues 1582–1599 the composition is skewed to polar residues; it reads KEVSPLSSHQTTECSNSK. Residues 1624–1638 show a composition bias toward low complexity; sequence SQNTKRSSSSSNTRQ. The segment covering 1645–1663 has biased composition (basic and acidic residues); the sequence is SKEENWNLHKNEHLDKHNK.

In terms of assembly, interacts with CTTN/cortactin SH3 domain. Interacts with STRN, STRN4/zinedin and MOB4/phocein; this interactions mediate the association with the STRIPAK core complex and may regulate dendritic spine distribution of the STRIPAK complex in hippocampal neurons. Activation of glutamate receptors weakens the interaction with STRN and STRN4.

The protein resides in the cytoplasm. It localises to the cell cortex. The protein localises to the cell projection. Its subcellular location is the dendritic spine. Its function is as follows. Regulates the dendritic spine distribution of CTTN/cortactin in hippocampal neurons, and thus controls dendritic spinogenesis and dendritic spine maintenance. Associates with the striatin-interacting phosphatase and kinase (STRIPAK) core complex to regulate dendritic spine distribution of the STRIPAK complex in hippocampal neurons. The polypeptide is Cortactin-binding protein 2 (CTTNBP2) (Papio anubis (Olive baboon)).